The chain runs to 309 residues: Porphobilinogen deaminase (309 aa).

C241 bears the S-(dipyrrolylmethanemethyl)cysteine mark.

The protein belongs to the HMBS family. Monomer. Requires dipyrromethane as cofactor.

It catalyses the reaction 4 porphobilinogen + H2O = hydroxymethylbilane + 4 NH4(+). It functions in the pathway porphyrin-containing compound metabolism; protoporphyrin-IX biosynthesis; coproporphyrinogen-III from 5-aminolevulinate: step 2/4. Functionally, tetrapolymerization of the monopyrrole PBG into the hydroxymethylbilane pre-uroporphyrinogen in several discrete steps. The chain is Porphobilinogen deaminase from Bacillus thuringiensis subsp. konkukian (strain 97-27).